A 274-amino-acid polypeptide reads, in one-letter code: Thymidylate synthase (274 aa).

DUMP is bound at residue Arg-21. His-51 is a binding site for (6R)-5,10-methylene-5,6,7,8-tetrahydrofolate. Residue 123-124 (RR) participates in dUMP binding. The active-site Nucleophile is the Cys-156. Residues 176–179 (RSAD), Asn-187, and 217–219 (HIY) each bind dUMP. Position 179 (Asp-179) interacts with (6R)-5,10-methylene-5,6,7,8-tetrahydrofolate. Ala-273 is a (6R)-5,10-methylene-5,6,7,8-tetrahydrofolate binding site.

Belongs to the thymidylate synthase family. Bacterial-type ThyA subfamily. Homodimer.

It localises to the cytoplasm. It catalyses the reaction dUMP + (6R)-5,10-methylene-5,6,7,8-tetrahydrofolate = 7,8-dihydrofolate + dTMP. The protein operates within pyrimidine metabolism; dTTP biosynthesis. Functionally, catalyzes the reductive methylation of 2'-deoxyuridine-5'-monophosphate (dUMP) to 2'-deoxythymidine-5'-monophosphate (dTMP) while utilizing 5,10-methylenetetrahydrofolate (mTHF) as the methyl donor and reductant in the reaction, yielding dihydrofolate (DHF) as a by-product. This enzymatic reaction provides an intracellular de novo source of dTMP, an essential precursor for DNA biosynthesis. The sequence is that of Thymidylate synthase from Christiangramia forsetii (strain DSM 17595 / CGMCC 1.15422 / KT0803) (Gramella forsetii).